Consider the following 221-residue polypeptide: Pre-hexon-linking protein VIII (221 aa).

Phosphothreonine; by host is present on Thr65. A propeptide spanning residues 113–150 is cleaved from the precursor; it reads AAPWSGVKTGSFCGRGLQLAEPPTTAIYPSGLFHLGRG.

It belongs to the adenoviridae hexon-linking protein family. As to quaternary structure, interacts with the peripentonal hexons as well as the hexons in the facets. Part of a complex composed of the core-capsid bridging protein, the endosome lysis protein VI and the hexon-linking protein VIII; these interactions bridge the virus core to the capsid. In terms of processing, cleaved by the viral protease during virion maturation. May cause the middle segment to be shed from the capsid.

The protein localises to the virion. It is found in the host nucleus. Functionally, structural component of the virion that acts as a cement protein on the capsid interior and which glue the peripentonal hexons and group-of-nine hexons together. This chain is Pre-hexon-linking protein VIII, found in Sus scrofa (Pig).